The following is a 478-amino-acid chain: Zinc metalloproteinase/disintegrin ussurin (478 aa).

The signal sequence occupies residues 1 to 20 (MIQVLLVTICLAAFPYQGSS). A propeptide spanning residues 21 to 190 (IILESGNVND…KKASPLVVTT (170 aa)) is cleaved from the precursor. Residues 193–389 (RYVELVVVAD…RNPQCILNKP (197 aa)) enclose the Peptidase M12B domain. 2 residues coordinate Ca(2+): E196 and D280. 3 disulfides stabilise this stretch: C304/C384, C344/C368, and C346/C351. Position 329 (H329) interacts with Zn(2+). The active site involves E330. 2 residues coordinate Zn(2+): H333 and H339. Residues C384 and N387 each contribute to the Ca(2+) site. A propeptide spanning residues 390-413 (LRTDIVSTPVSGNELLEAGEECDC) is cleaved from the precursor. Residues 397 to 478 (TPVSGNELLE…AGCPRNPFHA (82 aa)) enclose the Disintegrin domain. Disulfide bonds link C411/C426, C413/C421, C420/C443, C434/C440, C439/C464, and C452/C471. A Cell attachment site motif is present at residues 456–458 (RGD).

This sequence belongs to the venom metalloproteinase (M12B) family. P-II subfamily. P-IIa sub-subfamily. In terms of assembly, monomer. Zn(2+) serves as cofactor. Expressed by the venom gland.

The protein resides in the secreted. In terms of biological role, impairs hemostasis in the envenomed animal. Inhibits platelet aggregation induced by ADP, thrombin, platelet-activating factor and collagen. Acts by inhibiting fibrinogen interaction with platelet receptors GPIIb/GPIIIa (ITGA2B/ITGB3). This is Zinc metalloproteinase/disintegrin ussurin from Gloydius ussuriensis (Ussuri mamushi).